A 322-amino-acid chain; its full sequence is Elongation factor P--(R)-beta-lysine ligase (322 aa).

72 to 74 (SPE) contributes to the substrate binding site. ATP is bound by residues 96–98 (RNN) and Asn106. Residue Tyr115 coordinates substrate. 241–242 (EL) is a binding site for ATP. A substrate-binding site is contributed by Glu248. Gly297 lines the ATP pocket.

It belongs to the class-II aminoacyl-tRNA synthetase family. EpmA subfamily. As to quaternary structure, homodimer.

It catalyses the reaction D-beta-lysine + L-lysyl-[protein] + ATP = N(6)-((3R)-3,6-diaminohexanoyl)-L-lysyl-[protein] + AMP + diphosphate + H(+). In terms of biological role, with EpmB is involved in the beta-lysylation step of the post-translational modification of translation elongation factor P (EF-P). Catalyzes the ATP-dependent activation of (R)-beta-lysine produced by EpmB, forming a lysyl-adenylate, from which the beta-lysyl moiety is then transferred to the epsilon-amino group of a conserved specific lysine residue in EF-P. The chain is Elongation factor P--(R)-beta-lysine ligase from Buchnera aphidicola subsp. Baizongia pistaciae (strain Bp).